The chain runs to 293 residues: Methoxy mycolic acid synthase MmaA3 (293 aa).

Residues 39-40 (YS), 78-80 (GCG), 100-105 (TLSKNQ), 129-130 (WA), and Ile-142 each bind S-adenosyl-L-methionine. Cys-275 is an active-site residue.

This sequence belongs to the CFA/CMAS family.

It functions in the pathway lipid metabolism; mycolic acid biosynthesis. Involved in the biosynthesis of methoxymycolic acid. It catalyzes the O-methylation of the hydroxy group of the hydroxymycolate to form a methyl ether. The sequence is that of Methoxy mycolic acid synthase MmaA3 (cmaB) from Mycobacterium bovis (strain ATCC BAA-935 / AF2122/97).